The chain runs to 676 residues: tRNA 5-methylaminomethyl-2-thiouridine biosynthesis bifunctional protein MnmC (676 aa).

The interval Met1–Asn241 is tRNA (mnm(5)s(2)U34)-methyltransferase. The segment at Ile268–Lys676 is FAD-dependent cmnm(5)s(2)U34 oxidoreductase.

The protein in the N-terminal section; belongs to the methyltransferase superfamily. tRNA (mnm(5)s(2)U34)-methyltransferase family. It in the C-terminal section; belongs to the DAO family. The cofactor is FAD.

It is found in the cytoplasm. It carries out the reaction 5-aminomethyl-2-thiouridine(34) in tRNA + S-adenosyl-L-methionine = 5-methylaminomethyl-2-thiouridine(34) in tRNA + S-adenosyl-L-homocysteine + H(+). Its function is as follows. Catalyzes the last two steps in the biosynthesis of 5-methylaminomethyl-2-thiouridine (mnm(5)s(2)U) at the wobble position (U34) in tRNA. Catalyzes the FAD-dependent demodification of cmnm(5)s(2)U34 to nm(5)s(2)U34, followed by the transfer of a methyl group from S-adenosyl-L-methionine to nm(5)s(2)U34, to form mnm(5)s(2)U34. This chain is tRNA 5-methylaminomethyl-2-thiouridine biosynthesis bifunctional protein MnmC, found in Histophilus somni (strain 2336) (Haemophilus somnus).